The chain runs to 151 residues: UPF0178 protein Suden_0449 (151 aa).

This sequence belongs to the UPF0178 family.

The chain is UPF0178 protein Suden_0449 from Sulfurimonas denitrificans (strain ATCC 33889 / DSM 1251) (Thiomicrospira denitrificans (strain ATCC 33889 / DSM 1251)).